The following is a 220-amino-acid chain: UPF0502 protein VVA1225 (220 aa).

This sequence belongs to the UPF0502 family.

The sequence is that of UPF0502 protein VVA1225 from Vibrio vulnificus (strain YJ016).